The chain runs to 345 residues: Phosphoribosylformylglycinamidine cyclo-ligase (345 aa).

Belongs to the AIR synthase family.

The protein localises to the cytoplasm. It catalyses the reaction 2-formamido-N(1)-(5-O-phospho-beta-D-ribosyl)acetamidine + ATP = 5-amino-1-(5-phospho-beta-D-ribosyl)imidazole + ADP + phosphate + H(+). Its pathway is purine metabolism; IMP biosynthesis via de novo pathway; 5-amino-1-(5-phospho-D-ribosyl)imidazole from N(2)-formyl-N(1)-(5-phospho-D-ribosyl)glycinamide: step 2/2. In Synechococcus sp. (strain CC9902), this protein is Phosphoribosylformylglycinamidine cyclo-ligase.